Consider the following 321-residue polypeptide: Ferredoxin--NADP reductase (321 aa).

Positions 28, 36, 41, 81, 115, 274, and 315 each coordinate FAD.

It belongs to the ferredoxin--NADP reductase type 2 family. In terms of assembly, homodimer. The cofactor is FAD.

It carries out the reaction 2 reduced [2Fe-2S]-[ferredoxin] + NADP(+) + H(+) = 2 oxidized [2Fe-2S]-[ferredoxin] + NADPH. This Frankia casuarinae (strain DSM 45818 / CECT 9043 / HFP020203 / CcI3) protein is Ferredoxin--NADP reductase.